The chain runs to 314 residues: 2,3-dihydroxyphenylpropionate/2,3-dihydroxicinnamic acid 1,2-dioxygenase 2 (314 aa).

His115 acts as the Proton donor in catalysis. His179 (proton acceptor) is an active-site residue.

This sequence belongs to the LigB/MhpB extradiol dioxygenase family. Homotetramer. Fe(2+) is required as a cofactor.

The catalysed reaction is 3-(2,3-dihydroxyphenyl)propanoate + O2 = (2Z,4E)-2-hydroxy-6-oxonona-2,4-dienedioate + H(+). It carries out the reaction (2E)-3-(2,3-dihydroxyphenyl)prop-2-enoate + O2 = (2Z,4E,7E)-2-hydroxy-6-oxonona-2,4,7-trienedioate + H(+). Its pathway is aromatic compound metabolism; 3-phenylpropanoate degradation. Functionally, catalyzes the non-heme iron(II)-dependent oxidative cleavage of 2,3-dihydroxyphenylpropionic acid and 2,3-dihydroxicinnamic acid into 2-hydroxy-6-ketononadienedioate and 2-hydroxy-6-ketononatrienedioate, respectively. The polypeptide is 2,3-dihydroxyphenylpropionate/2,3-dihydroxicinnamic acid 1,2-dioxygenase 2 (mhpB2) (Pseudomonas putida (Arthrobacter siderocapsulatus)).